Consider the following 176-residue polypeptide: Mitochondrial inner membrane protein Mpv17 (176 aa).

Helical transmembrane passes span 18-38 (VQVLTAGSLMGLGDIISQQLV), 57-77 (LGCGFVGPVVGGWYRVLDHLI), 94-114 (GGFAPCFLGCFLPLVGVLNGM), and 131-151 (LITNYYLWPAVQLANFYLVPL).

It belongs to the peroxisomal membrane protein PXMP2/4 family.

It localises to the mitochondrion inner membrane. Functionally, non-selective channel that modulates the membrane potential under normal conditions and oxidative stress, and is involved in mitochondrial homeostasis. Involved in mitochondrial deoxynucleoside triphosphates (dNTP) pool homeostasis and mitochondrial DNA (mtDNA) maintenance. May be involved in the regulation of reactive oxygen species metabolism and the control of oxidative phosphorylation. The protein is Mitochondrial inner membrane protein Mpv17 of Rattus norvegicus (Rat).